Reading from the N-terminus, the 292-residue chain is Acetylglutamate kinase (292 aa).

Residues 64 to 65, arginine 86, and asparagine 190 each bind substrate; that span reads GG.

This sequence belongs to the acetylglutamate kinase family. ArgB subfamily.

The protein localises to the cytoplasm. The catalysed reaction is N-acetyl-L-glutamate + ATP = N-acetyl-L-glutamyl 5-phosphate + ADP. It functions in the pathway amino-acid biosynthesis; L-arginine biosynthesis; N(2)-acetyl-L-ornithine from L-glutamate: step 2/4. Its function is as follows. Catalyzes the ATP-dependent phosphorylation of N-acetyl-L-glutamate. The sequence is that of Acetylglutamate kinase from Trichlorobacter lovleyi (strain ATCC BAA-1151 / DSM 17278 / SZ) (Geobacter lovleyi).